The sequence spans 171 residues: Large ribosomal subunit protein uL22 (171 aa).

This sequence belongs to the universal ribosomal protein uL22 family.

The polypeptide is Large ribosomal subunit protein uL22 (RPL17) (Zea mays (Maize)).